The following is a 107-amino-acid chain: Phosphoribosyl-ATP pyrophosphatase (107 aa).

Belongs to the PRA-PH family.

It is found in the cytoplasm. The catalysed reaction is 1-(5-phospho-beta-D-ribosyl)-ATP + H2O = 1-(5-phospho-beta-D-ribosyl)-5'-AMP + diphosphate + H(+). The protein operates within amino-acid biosynthesis; L-histidine biosynthesis; L-histidine from 5-phospho-alpha-D-ribose 1-diphosphate: step 2/9. The polypeptide is Phosphoribosyl-ATP pyrophosphatase (Sinorhizobium fredii (strain NBRC 101917 / NGR234)).